A 523-amino-acid chain; its full sequence is Non-specific phospholipase C3 (523 aa).

A disordered region spans residues aspartate 44–alanine 64. Residues arginine 52–alanine 64 are compositionally biased toward polar residues.

This sequence belongs to the bacterial phospholipase C family. As to expression, expressed in root tips, cotyledons, on leaf margins, stems, young anthers and funiculus.

The enzyme catalyses a 1-acyl-sn-glycero-3-phosphate + H2O = a 1-acyl-sn-glycerol + phosphate. Its function is as follows. Possesses specific phosphatase activity toward lysophosphatidic acid (LPA) in vitro. Does not show phospholipase C activity. May play a role in signal transduction and storage lipid synthesis. May be involved in brassinolide-mediated signaling in root development. This Arabidopsis thaliana (Mouse-ear cress) protein is Non-specific phospholipase C3 (NPC3).